Reading from the N-terminus, the 215-residue chain is Adenylate kinase (215 aa).

ATP is bound at residue 10–15 (GAGKGT). An NMP region spans residues 30 to 59 (STGDMLRAAVKAGSPLGLKVKGVMDSGGLV). AMP is bound by residues Thr-31, Arg-36, 57–59 (GLV), 85–88 (GFPR), and Gln-92. The LID stretch occupies residues 122 to 159 (GRRVHAASGRVYHDLHNPPKVAGKDDETGEDLIQREDD). ATP-binding positions include Arg-123 and 132 to 133 (VY). AMP-binding residues include Arg-156 and Arg-167. Gly-201 contacts ATP.

Belongs to the adenylate kinase family. In terms of assembly, monomer.

The protein resides in the cytoplasm. It carries out the reaction AMP + ATP = 2 ADP. Its pathway is purine metabolism; AMP biosynthesis via salvage pathway; AMP from ADP: step 1/1. Catalyzes the reversible transfer of the terminal phosphate group between ATP and AMP. Plays an important role in cellular energy homeostasis and in adenine nucleotide metabolism. The polypeptide is Adenylate kinase (Azotobacter vinelandii (strain DJ / ATCC BAA-1303)).